The sequence spans 189 residues: UPF0301 protein Cgl3084/cg3414 (189 aa).

Belongs to the UPF0301 (AlgH) family.

The chain is UPF0301 protein Cgl3084/cg3414 from Corynebacterium glutamicum (strain ATCC 13032 / DSM 20300 / JCM 1318 / BCRC 11384 / CCUG 27702 / LMG 3730 / NBRC 12168 / NCIMB 10025 / NRRL B-2784 / 534).